We begin with the raw amino-acid sequence, 302 residues long: Glycine--tRNA ligase alpha subunit (302 aa).

It belongs to the class-II aminoacyl-tRNA synthetase family. In terms of assembly, tetramer of two alpha and two beta subunits.

The protein resides in the cytoplasm. It carries out the reaction tRNA(Gly) + glycine + ATP = glycyl-tRNA(Gly) + AMP + diphosphate. The chain is Glycine--tRNA ligase alpha subunit from Xanthomonas euvesicatoria pv. vesicatoria (strain 85-10) (Xanthomonas campestris pv. vesicatoria).